We begin with the raw amino-acid sequence, 354 residues long: S-adenosylmethionine:tRNA ribosyltransferase-isomerase (354 aa).

This sequence belongs to the QueA family. Monomer.

It is found in the cytoplasm. The enzyme catalyses 7-aminomethyl-7-carbaguanosine(34) in tRNA + S-adenosyl-L-methionine = epoxyqueuosine(34) in tRNA + adenine + L-methionine + 2 H(+). It participates in tRNA modification; tRNA-queuosine biosynthesis. Transfers and isomerizes the ribose moiety from AdoMet to the 7-aminomethyl group of 7-deazaguanine (preQ1-tRNA) to give epoxyqueuosine (oQ-tRNA). The chain is S-adenosylmethionine:tRNA ribosyltransferase-isomerase from Thermosynechococcus vestitus (strain NIES-2133 / IAM M-273 / BP-1).